The following is a 139-amino-acid chain: UPF0251 protein Csac_0224 (139 aa).

It belongs to the UPF0251 family.

In Caldicellulosiruptor saccharolyticus (strain ATCC 43494 / DSM 8903 / Tp8T 6331), this protein is UPF0251 protein Csac_0224.